The chain runs to 423 residues: Proline racemase A (423 aa).

The signal sequence occupies residues 1 to 31 (MRKSVCPKQKFFFSAFPFFFFFCVFPLISRT). C160 functions as the Proton acceptor in the catalytic mechanism. 161-162 (GH) is a substrate binding site. 3 N-linked (GlcNAc...) asparagine glycosylation sites follow: N213, N266, and N282. D326 is a substrate binding site. The active-site Proton donor is C330. 331–332 (GT) is a binding site for substrate.

It belongs to the proline racemase family. Homodimer.

Its subcellular location is the secreted. The protein resides in the membrane. It localises to the cytoplasm. It catalyses the reaction L-proline = D-proline. With respect to regulation, inhibited by maleic acid, iodoacetamide, iodoacetate and, most particularly, pyrrole-2-carboxylic acid. Functionally, catalyzes the interconversion of L- and D-proline. Secreted isoform 1 contributes to parasite immune evasion by acting as a B-cell mitogen. Probably involved in parasite differentiation and infectivity. The sequence is that of Proline racemase A (PA45-A) from Trypanosoma cruzi (strain CL Brener).